Reading from the N-terminus, the 265-residue chain is 4-hydroxy-tetrahydrodipicolinate reductase (265 aa).

16-21 (GANGKM) contacts NAD(+). Arg-43 provides a ligand contact to NADP(+). Residues 106–108 (GTT) and 130–133 (SENF) each bind NAD(+). His-164 functions as the Proton donor/acceptor in the catalytic mechanism. A (S)-2,3,4,5-tetrahydrodipicolinate-binding site is contributed by His-165. Lys-168 functions as the Proton donor in the catalytic mechanism. Residue 174 to 175 (AT) coordinates (S)-2,3,4,5-tetrahydrodipicolinate.

This sequence belongs to the DapB family. As to quaternary structure, homotetramer.

Its subcellular location is the cytoplasm. The enzyme catalyses (S)-2,3,4,5-tetrahydrodipicolinate + NAD(+) + H2O = (2S,4S)-4-hydroxy-2,3,4,5-tetrahydrodipicolinate + NADH + H(+). The catalysed reaction is (S)-2,3,4,5-tetrahydrodipicolinate + NADP(+) + H2O = (2S,4S)-4-hydroxy-2,3,4,5-tetrahydrodipicolinate + NADPH + H(+). Its pathway is amino-acid biosynthesis; L-lysine biosynthesis via DAP pathway; (S)-tetrahydrodipicolinate from L-aspartate: step 4/4. Functionally, catalyzes the conversion of 4-hydroxy-tetrahydrodipicolinate (HTPA) to tetrahydrodipicolinate. This Wigglesworthia glossinidia brevipalpis protein is 4-hydroxy-tetrahydrodipicolinate reductase.